The sequence spans 440 residues: Ankyrin repeat and MYND domain-containing protein 2 (440 aa).

3 ANK repeats span residues 45–74 (NGMTPLMHAAYKGKLEMCKLLLRHGADASC), 79–108 (HGYTALMFAALSGNKDITWVMLEAGAETDV), and 159–188 (KLAGPLHKIITTTNLHPVKIVMLVSENPLL). 8 residues coordinate Zn(2+): cysteine 320, cysteine 323, cysteine 332, cysteine 335, cysteine 341, cysteine 345, histidine 353, and cysteine 357. The MYND-type zinc-finger motif lies at 320-357 (CTTCGEKGASKRCSVCKMVIYCDQTCQKTHWFAHKKMC). The segment covering 371–381 (AAKHKRQEEKN) has biased composition (basic and acidic residues). Positions 371–440 (AAKHKRQEEK…APTGPQLSEE (70 aa)) are disordered.

In terms of assembly, interacts with the retinal-specific guanylyl cyclase GC1.

The protein resides in the cell projection. The protein localises to the cilium. Functionally, may be involved in the trafficking of signaling proteins to the cilia. The polypeptide is Ankyrin repeat and MYND domain-containing protein 2 (Ankmy2) (Mus musculus (Mouse)).